The chain runs to 212 residues: Peptidyl-prolyl cis-trans isomerase-like 3 (212 aa).

The 198-residue stretch at 1–198 (MSVTLHTTHG…EGEEGGYEAI (198 aa)) folds into the PPIase cyclophilin-type domain.

Belongs to the cyclophilin-type PPIase family. PPIL3 subfamily.

The enzyme catalyses [protein]-peptidylproline (omega=180) = [protein]-peptidylproline (omega=0). In terms of biological role, PPIases accelerate the folding of proteins. It catalyzes the cis-trans isomerization of proline imidic peptide bonds in oligopeptides. In Aspergillus fumigatus (strain ATCC MYA-4609 / CBS 101355 / FGSC A1100 / Af293) (Neosartorya fumigata), this protein is Peptidyl-prolyl cis-trans isomerase-like 3 (cyp10).